A 485-amino-acid polypeptide reads, in one-letter code: Adenosylhomocysteinase (485 aa).

Substrate contacts are provided by Thr64, Asp139, and Glu205. 206-208 is a binding site for NAD(+); that stretch reads TTT. 2 residues coordinate substrate: Lys235 and Asp239. NAD(+) is bound by residues Asn240, 269 to 274, Glu292, Asn327, 348 to 350, and Asn397; these read GYGDVG and IGH.

The protein belongs to the adenosylhomocysteinase family. It depends on NAD(+) as a cofactor.

The enzyme catalyses S-adenosyl-L-homocysteine + H2O = L-homocysteine + adenosine. It participates in amino-acid biosynthesis; L-homocysteine biosynthesis; L-homocysteine from S-adenosyl-L-homocysteine: step 1/1. Adenosylhomocysteine is a competitive inhibitor of S-adenosyl-L-methionine-dependent methyl transferase reactions; therefore adenosylhomocysteinase may play a key role in the control of methylations via regulation of the intracellular concentration of adenosylhomocysteine. This chain is Adenosylhomocysteinase (SAHH), found in Lupinus luteus (European yellow lupine).